Reading from the N-terminus, the 139-residue chain is Peptide methionine sulfoxide reductase B4 (139 aa).

An N-acetylalanine modification is found at A2. In terms of domain architecture, MsrB spans 12–133 (EEEWRAVLSP…NSVSINFNPA (122 aa)). 4 residues coordinate Zn(2+): C51, C54, C97, and C100. C69 and C122 are disulfide-bonded. The Nucleophile role is filled by C122.

Belongs to the MsrB Met sulfoxide reductase family. The cofactor is Zn(2+).

It localises to the cytoplasm. Its subcellular location is the cytosol. It carries out the reaction L-methionyl-[protein] + [thioredoxin]-disulfide + H2O = L-methionyl-(R)-S-oxide-[protein] + [thioredoxin]-dithiol. Catalyzes the reduction of methionine sulfoxide (MetSO) to methionine in proteins. Plays a protective role against oxidative stress by restoring activity to proteins that have been inactivated by methionine oxidation. MSRB family specifically reduces the MetSO R-enantiomer. This Arabidopsis thaliana (Mouse-ear cress) protein is Peptide methionine sulfoxide reductase B4 (MSRB4).